We begin with the raw amino-acid sequence, 288 residues long: Oxaloacetate decarboxylase (288 aa).

Ser-47 contacts substrate. Asp-85 is a Mg(2+) binding site. Substrate contacts are provided by Arg-156 and His-232.

Belongs to the isocitrate lyase/PEP mutase superfamily. Oxaloacetate decarboxylase family. Homotetramer; dimer of dimers. The cofactor is Mg(2+).

The catalysed reaction is oxaloacetate + H(+) = pyruvate + CO2. Its function is as follows. Catalyzes the decarboxylation of oxaloacetate into pyruvate. Seems to play a role in maintaining cellular concentrations of bicarbonate and pyruvate. The chain is Oxaloacetate decarboxylase from Bradyrhizobium sp. (strain ORS 278).